A 107-amino-acid chain; its full sequence is Ig kappa chain V-VI region XRPC 44 (107 aa).

A framework-1 region spans residues 1 to 23; the sequence is EIVLTQSPAITAASLGQKVTITC. Residues Cys23 and Cys87 are joined by a disulfide bond. A complementarity-determining-1 region spans residues 24-33; it reads SASSSVSYMH. The framework-2 stretch occupies residues 34–48; it reads WYQQKSGTSPKPWIY. Positions 49–55 are complementarity-determining-2; the sequence is EISKLAS. A framework-3 region spans residues 56-87; that stretch reads GVPARFSGSGSGTSYSLTISSMEAEDAAIYYC. Residues 88-96 are complementarity-determining-3; that stretch reads QQWNYPLWT. A framework-4 region spans residues 97-106; it reads FGGGTKLEIK.

The sequence is that of Ig kappa chain V-VI region XRPC 44 from Mus musculus (Mouse).